The primary structure comprises 213 residues: Calcium-dependent cell adhesion molecule 1 (213 aa).

4 tandem repeats follow at residues 1–48 (MSVD…LVGS), 49–97 (NVRC…GAFQ), 98–146 (WAVD…LTPP), and 147–194 (DSEI…FPKN). The interval 1-194 (MSVDANKVKF…IKKDETFPKN (194 aa)) is 4 X approximate tandem repeats.

It belongs to the Dictyostelium CAD family. In terms of processing, the N-terminus is blocked.

Its subcellular location is the cell membrane. Mediates calcium-dependent cell-cell adhesion during the early stage of development. This is Calcium-dependent cell adhesion molecule 1 (cadA) from Dictyostelium discoideum (Social amoeba).